The following is a 193-amino-acid chain: Phosphatidylglycerophosphatase and protein-tyrosine phosphatase 1 (193 aa).

The N-terminal 31 residues, 1-31 (MAASAWLEAGLARVLFYPTLLYTVFRGRVRG), are a transit peptide targeting the mitochondrion. The 152-residue stretch at 37-188 (WYHRIDHTVL…LKEFHKEITA (152 aa)) folds into the Tyrosine-protein phosphatase domain. N6-succinyllysine is present on Lys-85. Cys-132 serves as the catalytic Phosphocysteine intermediate.

Belongs to the protein-tyrosine phosphatase family. Non-receptor class dual specificity subfamily. Interacts with STYXL1; the interaction inhibits PTPMT1 catalytic activity. Predominantly expressed in testis. Expressed at lower level in heart, brain, spleen, lung, liver, skeletal muscle, kidney, bone marrow, eye, lymph node, smooth muscle, prostate, thymus, stomach and uterus.

Its subcellular location is the mitochondrion inner membrane. It carries out the reaction a 1,2-diacyl-sn-glycero-3-phospho-(1'-sn-glycero-3'-phosphate) + H2O = a 1,2-diacyl-sn-glycero-3-phospho-(1'-sn-glycerol) + phosphate. It catalyses the reaction O-phospho-L-tyrosyl-[protein] + H2O = L-tyrosyl-[protein] + phosphate. The catalysed reaction is O-phospho-L-seryl-[protein] + H2O = L-seryl-[protein] + phosphate. The enzyme catalyses O-phospho-L-threonyl-[protein] + H2O = L-threonyl-[protein] + phosphate. It carries out the reaction 1,2-di-(9Z-octadecenoyl)-sn-glycero-3-phospho-(1'-sn-glycerol-3'-phosphate) + H2O = 1,2-di-(9Z-octadecenoyl)-sn-glycero-3-phospho-(1'-sn-glycerol) + phosphate. It catalyses the reaction 1,2-dioctanoyl-sn-glycero-3-phospho-(1D-myo-inositol-5-phosphate) + H2O = 1,2-dioctanoyl-sn-glycero-3-phospho-(1D-myo-inositol) + phosphate. The catalysed reaction is a 1-acyl-2-hexanoyl-sn-glycero-3-phospho-(1D-myo-inositol-5-phosphate) + H2O = a 1-acyl-2-hexanoyl-sn-glycero-3-phospho-(1D-myo-inositol) + phosphate. The enzyme catalyses 1,2-dibutyryl-sn-glycero-3-phospho-(1D-myo-inositol-5-phosphate) + H2O = 1,2-dibutyryl-sn-glycero-3-phospho-(1D-myo-inositol) + phosphate. It functions in the pathway phospholipid metabolism; phosphatidylglycerol biosynthesis; phosphatidylglycerol from CDP-diacylglycerol: step 2/2. In terms of biological role, lipid phosphatase which dephosphorylates phosphatidylglycerophosphate (PGP) to phosphatidylglycerol (PG). PGP is an essential intermediate in the biosynthetic pathway of cardiolipin, a mitochondrial-specific phospholipid regulating the membrane integrity and activities of the organelle. Has also been shown to display phosphatase activity toward phosphoprotein substrates, specifically mediates dephosphorylation of mitochondrial proteins, thereby playing an essential role in ATP production. Has probably a preference for proteins phosphorylated on Ser and/or Thr residues compared to proteins phosphorylated on Tyr residues. Probably involved in regulation of insulin secretion in pancreatic beta cells. May prevent intrinsic apoptosis, probably by regulating mitochondrial membrane integrity. This chain is Phosphatidylglycerophosphatase and protein-tyrosine phosphatase 1, found in Mus musculus (Mouse).